A 510-amino-acid chain; its full sequence is MSVELWQQCVELLRDELPAQQFNTWIRPLQVEAEGDELRVYAPNRFVLDWVNEKYLGRLLELLGENGSGIAPALSLLIGSRRSSAPRAAPNAPVSAAVAASLAQTQAHKAAPTPAAVEPIAVAAAEPVLVDELAEPSSRDSFDAMAEPASAPASSGRAEQRTVQVEGALKHTSYLNRTFTFDTFVEGKSNQLARAAAWQVADNPKHGYNPLFLYGGVGLGKTHLMHAVGNHLLKKNPNAKVVYLHSERFVADMVKALQLNAINEFKRFYRSVDALLIDDIQFFARKERSQEEFFHTFNALLEGGQQVILTSDRYPKEIEGLEERLKSRFGWGLTVAVEPPELETRVAILMKKADQAKVELPHDAAFFIAQRIRSNVRELEGALKRVIAHSHFMGRDITIELIRESLKDLLALQDKLVSVDNIQRTVAEYYKIKISDLLSKRRSRSVARPRQVAMALSKELTNHSLPEIGDMFGGRDHTTVLHACRKINELKESDADIREDYKNLLRTLTT.

Residues 1-87 (MSVELWQQCV…IGSRRSSAPR (87 aa)) are domain I, interacts with DnaA modulators. The tract at residues 87–173 (RAAPNAPVSA…QVEGALKHTS (87 aa)) is domain II. Residues 140–160 (DSFDAMAEPASAPASSGRAEQ) form a disordered region. The span at 144–157 (AMAEPASAPASSGR) shows a compositional bias: low complexity. Residues 174–390 (YLNRTFTFDT…GALKRVIAHS (217 aa)) form a domain III, AAA+ region region. Residues Gly-218, Gly-220, Lys-221, and Thr-222 each coordinate ATP. The segment at 391–510 (HFMGRDITIE…YKNLLRTLTT (120 aa)) is domain IV, binds dsDNA.

This sequence belongs to the DnaA family. As to quaternary structure, oligomerizes as a right-handed, spiral filament on DNA at oriC.

The protein localises to the cytoplasm. Plays an essential role in the initiation and regulation of chromosomal replication. ATP-DnaA binds to the origin of replication (oriC) to initiate formation of the DNA replication initiation complex once per cell cycle. Binds the DnaA box (a 9 base pair repeat at the origin) and separates the double-stranded (ds)DNA. Forms a right-handed helical filament on oriC DNA; dsDNA binds to the exterior of the filament while single-stranded (ss)DNA is stabiized in the filament's interior. The ATP-DnaA-oriC complex binds and stabilizes one strand of the AT-rich DNA unwinding element (DUE), permitting loading of DNA polymerase. After initiation quickly degrades to an ADP-DnaA complex that is not apt for DNA replication. Binds acidic phospholipids. This chain is Chromosomal replication initiator protein DnaA, found in Pseudomonas putida (strain GB-1).